We begin with the raw amino-acid sequence, 305 residues long: UDP-3-O-acyl-N-acetylglucosamine deacetylase (305 aa).

His-79, His-238, and Asp-242 together coordinate Zn(2+). His-265 serves as the catalytic Proton donor.

The protein belongs to the LpxC family. Requires Zn(2+) as cofactor.

The catalysed reaction is a UDP-3-O-[(3R)-3-hydroxyacyl]-N-acetyl-alpha-D-glucosamine + H2O = a UDP-3-O-[(3R)-3-hydroxyacyl]-alpha-D-glucosamine + acetate. Its pathway is glycolipid biosynthesis; lipid IV(A) biosynthesis; lipid IV(A) from (3R)-3-hydroxytetradecanoyl-[acyl-carrier-protein] and UDP-N-acetyl-alpha-D-glucosamine: step 2/6. Functionally, catalyzes the hydrolysis of UDP-3-O-myristoyl-N-acetylglucosamine to form UDP-3-O-myristoylglucosamine and acetate, the committed step in lipid A biosynthesis. The sequence is that of UDP-3-O-acyl-N-acetylglucosamine deacetylase from Shigella dysenteriae serotype 1 (strain Sd197).